A 989-amino-acid chain; its full sequence is MSMNVTNPNIAKTSMRGLTNFISDLRNSPSKENEEKRVTKEMAHIRKEFKENKNIDGYQRRKYVCKLVYMYMLGYELDFGHMEAVTLLSSTKFSEKQIGYIALGILLNEQHEMLPLIINSFKEDLLARSDYFQSLALAAICNIGGKEVAEFLSPLIQKLLIANTSSPMVKKRCALAILRMNRKHIGLVTPDSWVERLVSVLDEPDFGVLTSLMSLLIELASENPIGWEPAIPKVIHLLKKIIINKEFPKEYVYYHVTCPWLQVKLLKFLRYFPAPDDSQGGKVLGEILTAVFAQSESAKAGTVNHKNSLNAVLFEAINLIIHLDNDPVLLKQTSLLLGRFITVKETNIRYLGLEAMSHFASLSNETSIMIKKYQDTVLLSLKDSDISIRRRALDLLYGMCDKNTCKHIVAELLSYLQTADYAIREELVIKIANLAEKFASNYSWYVDVILQLITTAGDFVSDDIWFRVVKIVTNHEDIQAYAASTVFNALQSRNCHETLIKVGGYILGEFGHLIADNPQSSPLVQFNILHSKFNTCGAPTKALLLSTYAKFVNLFPELTQQTQEVFKQHQSYIDAEIQQRACEYLNLTSLNEDLMQTVLDVIPAFIDAKDNSNTTSNTANNSNMINSQDSKISSGGFNQSPQPSQQQQQQQPPQQQQAQLQQNVSSNGLDLLDPFGLGLGNQQQQQQQPVQQAQPVYQQQQQAESFSPVQSDTVSSFGQQQQQQQGGFSSPTIQASSSPISSGGSDPMQIKILASYKRLCLVSEGVLYEDSMLQVGLKSEYQSGQGRLMLYYGNSSAFPLTNFNVTLNSIAGLTLQPQSIAPVIQPKAQLQQPVTFSCTSEFTESPVITINFLTPGKPITITLRLPIVISKFFEPLRLSSGDFFARWKTISGKPLEIQEIFKSTKPIDIQSYNRVIQEGLNITVLKQVDPNPNNIVASCLFPFGSNGQPINSYIRIETNPQANMCRLTIRSQSATLTNTIKNLLISHLQ.

4 HEAT repeats span residues 112–149 (EMLPLIINSFKEDLLARSDYFQSLALAAICNIGGKEVA), 188–225 (VTPDSWVERLVSVLDEPDFGVLTSLMSLLIELASENPI), 368–402 (IMIKKYQDTVLLSLKDSDISIRRRALDLLYGMCDK), and 403–440 (NTCKHIVAELLSYLQTADYAIREELVIKIANLAEKFAS). Positions 610 to 745 (DNSNTTSNTA…SSSPISSGGS (136 aa)) are disordered. Residues 611 to 623 (NSNTTSNTANNSN) are compositionally biased toward low complexity. Residues 624-638 (MINSQDSKISSGGFN) show a composition bias toward polar residues. Over residues 639–703 (QSPQPSQQQQ…QPVYQQQQQA (65 aa)) the composition is skewed to low complexity. The span at 704 to 714 (ESFSPVQSDTV) shows a compositional bias: polar residues. Residues 715 to 745 (SSFGQQQQQQQGGFSSPTIQASSSPISSGGS) are compositionally biased toward low complexity.

It belongs to the adaptor complexes large subunit family. Adaptor protein complex 2 (AP-2) is a heterotetramer composed of two large adaptins (alpha-type and beta-type subunits), a medium adaptin (mu-type subunit AP50) and a small adaptin (sigma-type subunit AP17).

The protein localises to the cell membrane. Its subcellular location is the membrane. The protein resides in the coated pit. Its function is as follows. Component of the adaptor complexes which link clathrin to receptors in coated vesicles. Clathrin-associated protein complexes are believed to interact with the cytoplasmic tails of membrane proteins, leading to their selection and concentration. This Dictyostelium discoideum (Social amoeba) protein is AP-2 complex subunit alpha-2 (ap2a1-1).